Reading from the N-terminus, the 298-residue chain is Protoheme IX farnesyltransferase (298 aa).

A run of 9 helical transmembrane segments spans residues 26 to 46 (VVGHIVFTAIIGMFLAVPGVP), 52 to 72 (FWASLGIGFAAASAAALNHFL), 98 to 118 (VVGFALVLGIVAMAILIAFVN), 120 to 140 (LTAFLTFLSLIGYAVIYTVYL), 148 to 168 (IVIGGAAGAAPPVLGWCAVTG), 174 to 194 (ALLLFLLIFVWTPPHFWAYAI), 214 to 234 (IAFTQLHILLYTILLFLAGLM), 241 to 261 (SGEIYLAAALIFGGIFVYYAI), and 278 to 298 (YSLVYLVGIFSALLVDHYIVL).

The protein belongs to the UbiA prenyltransferase family. Protoheme IX farnesyltransferase subfamily.

It localises to the cell inner membrane. It catalyses the reaction heme b + (2E,6E)-farnesyl diphosphate + H2O = Fe(II)-heme o + diphosphate. The protein operates within porphyrin-containing compound metabolism; heme O biosynthesis; heme O from protoheme: step 1/1. Converts heme B (protoheme IX) to heme O by substitution of the vinyl group on carbon 2 of heme B porphyrin ring with a hydroxyethyl farnesyl side group. This is Protoheme IX farnesyltransferase from Methylococcus capsulatus (strain ATCC 33009 / NCIMB 11132 / Bath).